A 524-amino-acid chain; its full sequence is tRNA-2-methylthio-N(6)-dimethylallyladenosine synthase (524 aa).

A compositionally biased stretch (basic and acidic residues) spans 1–12 (MNTHPSHPDHPA). Residues 1 to 23 (MNTHPSHPDHPADTLPARGNREG) form a disordered region. Residues 27-143 (RTYEVRTFGC…LPTLLNRAEH (117 aa)) form the MTTase N-terminal domain. The [4Fe-4S] cluster site is built by C36, C72, C106, C180, C184, and C187. The region spanning 166-402 (RESAYAGWVS…MALQERICEE (237 aa)) is the Radical SAM core domain. In terms of domain architecture, TRAM spans 405-476 (QKFIGQTVEL…PFFLIADAGV (72 aa)).

It belongs to the methylthiotransferase family. MiaB subfamily. In terms of assembly, monomer. [4Fe-4S] cluster is required as a cofactor.

Its subcellular location is the cytoplasm. The enzyme catalyses N(6)-dimethylallyladenosine(37) in tRNA + (sulfur carrier)-SH + AH2 + 2 S-adenosyl-L-methionine = 2-methylsulfanyl-N(6)-dimethylallyladenosine(37) in tRNA + (sulfur carrier)-H + 5'-deoxyadenosine + L-methionine + A + S-adenosyl-L-homocysteine + 2 H(+). Functionally, catalyzes the methylthiolation of N6-(dimethylallyl)adenosine (i(6)A), leading to the formation of 2-methylthio-N6-(dimethylallyl)adenosine (ms(2)i(6)A) at position 37 in tRNAs that read codons beginning with uridine. The polypeptide is tRNA-2-methylthio-N(6)-dimethylallyladenosine synthase (Corynebacterium efficiens (strain DSM 44549 / YS-314 / AJ 12310 / JCM 11189 / NBRC 100395)).